The chain runs to 347 residues: METPFYGDEALSGLGGGASGSGGSFASPGRLFPGAPPTAAAGSMMKKDALTLSLSEQVAAALKPAAAPPPTPLRADGAPSAAPPDGLLASPDLGLLKLASPELERLIIQSNGLVTTTPTSSQFLYPKVAASEEQEFAEGFVKALEDLHKQNQLGAGAAAAAAAAAAGGPSGTATGSAPPGELAPAAAAPEAPVYANLSSYAGGAGGAGGAATVAFAAEPVPFPPPPPPGALGPPRLAALKDEPQTVPDVPSFGESPPLSPIDMDTQERIKAERKRLRNRIAASKCRKRKLERISRLEEKVKTLKSQNTELASTASLLREQVAQLKQKVLSHVNSGCQLLPQHQVPAY.

The interval 1 to 43 (METPFYGDEALSGLGGGASGSGGSFASPGRLFPGAPPTAAAGS) is disordered. Over residues 13–23 (GLGGGASGSGG) the composition is skewed to gly residues. A Menin-binding motif (MBM) motif is present at residues 27-39 (SPGRLFPGAPPTA). Positions 46–55 (KKDALTLSLS) match the MAP kinase docking motif; essential for its phosphorylation motif. The interval 62 to 86 (LKPAAAPPPTPLRADGAPSAAPPDG) is disordered. Residues 73–86 (LRADGAPSAAPPDG) are compositionally biased toward low complexity. A Phosphoserine modification is found at Ser-90. Position 100 is a phosphoserine; by MAPK8 (Ser-100). A Phosphothreonine modification is found at Thr-117. The tract at residues 244–264 (QTVPDVPSFGESPPLSPIDMD) is disordered. Phosphoserine is present on residues Ser-251, Ser-255, and Ser-259. A basic motif region spans residues 268–295 (RIKAERKRLRNRIAASKCRKRKLERISR). The region spanning 268–331 (RIKAERKRLR…AQLKQKVLSH (64 aa)) is the bZIP domain. A leucine-zipper region spans residues 296-324 (LEEKVKTLKSQNTELASTASLLREQVAQL).

The protein belongs to the bZIP family. Jun subfamily. Heterodimer; binds DNA as a heterodimer. Component of an AP-1 transcription factor complex composed of JUN-FOS heterodimers. As part of the AP-1 transcription factor complex, forms heterodimers with FOS proteins, thereby binding to the AP-1 consensus sequence and stimulating transcription. Forms heterodimers with FOSB; thereby binding to the AP-1 consensus sequence. Interacts (via MBM motif) with MEN1; this interaction represses transcriptional activation. Interacts with MAPK10; this interaction is inhibited in the presence of MEN1. In terms of processing, phosphorylated by MAP kinases MAPK8 and MAPK10; phosphorylation is inhibited in the presence of MEN1.

The protein localises to the nucleus. Transcription factor binding AP-1 sites. Heterodimerizes with proteins of the FOS family to form an AP-1 transcription factor complex, thereby enhancing their DNA binding activity to an AP-1 consensus sequence 3'-TGA[GC]TCA-5' and enhancing their transcriptional activity. The chain is Transcription factor JunD (JUND) from Homo sapiens (Human).